A 1502-amino-acid chain; its full sequence is Autophagy-related protein 2 (1502 aa).

The span at 211-222 (QLSPTNSHQNTD) shows a compositional bias: polar residues. The tract at residues 211–234 (QLSPTNSHQNTDSDVEENENTDSE) is disordered. Residues 223–234 (SDVEENENTDSE) are compositionally biased toward acidic residues.

This sequence belongs to the ATG2 family.

Its subcellular location is the preautophagosomal structure membrane. It is found in the endoplasmic reticulum membrane. It catalyses the reaction a 1,2-diacyl-sn-glycero-3-phosphocholine(in) = a 1,2-diacyl-sn-glycero-3-phosphocholine(out). It carries out the reaction a 1,2-diacyl-sn-glycero-3-phospho-L-serine(in) = a 1,2-diacyl-sn-glycero-3-phospho-L-serine(out). The enzyme catalyses a 1,2-diacyl-sn-glycero-3-phosphoethanolamine(in) = a 1,2-diacyl-sn-glycero-3-phosphoethanolamine(out). In terms of biological role, lipid transfer protein required for autophagosome completion and peroxisome degradation. Tethers the edge of the isolation membrane (IM) to the endoplasmic reticulum (ER) and mediates direct lipid transfer from ER to IM for IM expansion. ATG2 binds to the ER exit site (ERES), which is the membrane source for autophagosome formation, using basic residues in its N-terminal region (NR) and to the expanding edge of the IM through its C-terminal region. The latter binding is assisted by an ATG18-PtdIns3P interaction. ATG2 then extracts phospholipids from the membrane source using its NR and transfers them to ATG9 to the IM through its predicted beta-sheet-rich structure for membrane expansion. This is Autophagy-related protein 2 (ATG2) from Kluyveromyces lactis (strain ATCC 8585 / CBS 2359 / DSM 70799 / NBRC 1267 / NRRL Y-1140 / WM37) (Yeast).